Reading from the N-terminus, the 272-residue chain is 4-hydroxy-tetrahydrodipicolinate reductase (272 aa).

10–15 (GAAGRM) contacts NAD(+). Arg-37 contributes to the NADP(+) binding site. NAD(+)-binding positions include 100–102 (GTT) and 124–127 (SGNM). Residue His-157 is the Proton donor/acceptor of the active site. (S)-2,3,4,5-tetrahydrodipicolinate is bound at residue His-158. The active-site Proton donor is the Lys-161. 167–168 (GT) lines the (S)-2,3,4,5-tetrahydrodipicolinate pocket.

It belongs to the DapB family.

The protein localises to the cytoplasm. It carries out the reaction (S)-2,3,4,5-tetrahydrodipicolinate + NAD(+) + H2O = (2S,4S)-4-hydroxy-2,3,4,5-tetrahydrodipicolinate + NADH + H(+). It catalyses the reaction (S)-2,3,4,5-tetrahydrodipicolinate + NADP(+) + H2O = (2S,4S)-4-hydroxy-2,3,4,5-tetrahydrodipicolinate + NADPH + H(+). It participates in amino-acid biosynthesis; L-lysine biosynthesis via DAP pathway; (S)-tetrahydrodipicolinate from L-aspartate: step 4/4. Functionally, catalyzes the conversion of 4-hydroxy-tetrahydrodipicolinate (HTPA) to tetrahydrodipicolinate. In Methylocella silvestris (strain DSM 15510 / CIP 108128 / LMG 27833 / NCIMB 13906 / BL2), this protein is 4-hydroxy-tetrahydrodipicolinate reductase.